The sequence spans 529 residues: 56 kDa type-specific antigen (529 aa).

The N-terminal stretch at 1–22 (MKKIMLIASAMSALSLPFSASA) is a signal peptide. A helical transmembrane segment spans residues 67 to 87 (LTTSMPFGGTLAAGMTIAPGF). Positions 106 to 116 (GKTGSDADIRS) are enriched in basic and acidic residues. 2 disordered regions span residues 106–134 (GKTG…PQPT) and 392–424 (DGGC…KGKE). The helical transmembrane segment at 477–492 (TGMVASGALGVAINAA) threads the bilayer.

It localises to the cell membrane. Its function is as follows. May be an adherent factor for rickettsial adsorption to the host-cell surface and a determinant of virulence of individual rickettsial strain. It is the major outer membrane protein. The chain is 56 kDa type-specific antigen from Orientia tsutsugamushi (Rickettsia tsutsugamushi).